The chain runs to 450 residues: Akuammiline synthase 2 (450 aa).

H154 serves as the catalytic Proton acceptor. The short motif at 218-225 (MRRFVFDA) is the Nuclear localization signal element. The active-site Proton acceptor is the D376.

The protein belongs to the plant acyltransferase family. In terms of assembly, monomer.

Its subcellular location is the cytoplasm. It is found in the nucleus. The catalysed reaction is rhazimol + acetyl-CoA = akuammiline + CoA + H(+). The protein operates within alkaloid biosynthesis. In terms of biological role, acyltransferase involved in the biosynthesis of akuammilan monoterpene indole alkaloids (MIAs) natural products, components with various biological properties such as antidiabetic, antibacterial, anti-inflammatory, anticancer, and antimalarial activities. Catalyzes the conversion of rhazimol to akuammiline. This is Akuammiline synthase 2 from Alstonia scholaris (Dogbane).